Reading from the N-terminus, the 288-residue chain is PAK4-inhibitor inka2 (288 aa).

Residues 159-196 (DPTDWTTSLLTRGRNRQPLVLGDNSFADLIKNWMDLPE) form an inka box region.

This sequence belongs to the INKA family.

It is found in the nucleus. Its function is as follows. Inhibitor of the serine/threonine-protein kinase pak4/pak5. Acts by binding pak4/pak5 in a substrate-like manner, inhibiting the protein kinase activity. This Danio rerio (Zebrafish) protein is PAK4-inhibitor inka2.